A 264-amino-acid polypeptide reads, in one-letter code: Acyl-[acyl-carrier-protein]--UDP-N-acetylglucosamine O-acyltransferase (264 aa).

It belongs to the transferase hexapeptide repeat family. LpxA subfamily. In terms of assembly, homotrimer.

Its subcellular location is the cytoplasm. It carries out the reaction a (3R)-hydroxyacyl-[ACP] + UDP-N-acetyl-alpha-D-glucosamine = a UDP-3-O-[(3R)-3-hydroxyacyl]-N-acetyl-alpha-D-glucosamine + holo-[ACP]. It participates in glycolipid biosynthesis; lipid IV(A) biosynthesis; lipid IV(A) from (3R)-3-hydroxytetradecanoyl-[acyl-carrier-protein] and UDP-N-acetyl-alpha-D-glucosamine: step 1/6. Its function is as follows. Involved in the biosynthesis of lipid A, a phosphorylated glycolipid that anchors the lipopolysaccharide to the outer membrane of the cell. This chain is Acyl-[acyl-carrier-protein]--UDP-N-acetylglucosamine O-acyltransferase, found in Rickettsia canadensis (strain McKiel).